Consider the following 68-residue polypeptide: Large ribosomal subunit protein bL35 (68 aa).

The protein belongs to the bacterial ribosomal protein bL35 family.

This Wolbachia pipientis subsp. Culex pipiens (strain wPip) protein is Large ribosomal subunit protein bL35.